Here is a 212-residue protein sequence, read N- to C-terminus: Redox-sensing transcriptional repressor Rex (212 aa).

Positions 17–56 (KYHRYLQELMENDVDRISSKELSEKIGFTASQIRQDLNCF) form a DNA-binding region, H-T-H motif. Position 91 to 96 (91 to 96 (GAGNIG)) interacts with NAD(+).

The protein belongs to the transcriptional regulatory Rex family. Homodimer.

The protein localises to the cytoplasm. Functionally, modulates transcription in response to changes in cellular NADH/NAD(+) redox state. The polypeptide is Redox-sensing transcriptional repressor Rex (Clostridium perfringens (strain ATCC 13124 / DSM 756 / JCM 1290 / NCIMB 6125 / NCTC 8237 / Type A)).